We begin with the raw amino-acid sequence, 348 residues long: N6-Methyl-AMP deaminase (348 aa).

Positions 18 and 20 each coordinate Zn(2+). N(6)-methyl-AMP contacts are provided by residues His-20, Asn-22, His-68, 100 to 103 (STPR), Asp-142, and Gly-175. Residue His-202 participates in Zn(2+) binding. 3 residues coordinate N(6)-methyl-AMP: Glu-205, Asp-287, and Asp-288. Glu-205 serves as the catalytic Proton donor. Asp-287 is a Zn(2+) binding site.

It belongs to the metallo-dependent hydrolases superfamily. Adenosine and AMP deaminases family. Monomer. Zn(2+) serves as cofactor.

The catalysed reaction is N(6)-methyl-AMP + H2O + H(+) = IMP + methylamine. In terms of biological role, catalyzes the hydrolysis of the free cytosolic methylated adenosine nucleotide N(6)-methyl-AMP (N6-mAMP) to produce inositol monophosphate (IMP) and methylamine. Is required for the catabolism of cytosolic N6-mAMP, which is derived from the degradation of mRNA containing N6-methylated adenine (m6A). The chain is N6-Methyl-AMP deaminase (mapda) from Danio rerio (Zebrafish).